The primary structure comprises 108 residues: Small ribosomal subunit protein bS16 (108 aa).

A disordered region spans residues 82 to 108 (ESKFSKNTQTENKKPVSKKTTKKSKDN). The span at 96–108 (PVSKKTTKKSKDN) shows a compositional bias: basic residues.

Belongs to the bacterial ribosomal protein bS16 family.

In Mycoplasma capricolum subsp. capricolum (strain California kid / ATCC 27343 / NCTC 10154), this protein is Small ribosomal subunit protein bS16.